The sequence spans 213 residues: Chloramphenicol acetyltransferase 2 (213 aa).

The Proton acceptor role is filled by histidine 189.

It belongs to the chloramphenicol acetyltransferase family. In terms of assembly, homotrimer.

The enzyme catalyses chloramphenicol + acetyl-CoA = chloramphenicol 3-acetate + CoA. In terms of biological role, this enzyme is an effector of chloramphenicol resistance in bacteria. The sequence is that of Chloramphenicol acetyltransferase 2 (cmlA) from Escherichia coli.